A 412-amino-acid chain; its full sequence is Argininosuccinate synthase (412 aa).

Residues 10–18 and alanine 36 each bind ATP; that span reads AYSGGLDTS. Positions 87 and 92 each coordinate L-citrulline. Tyrosine 87 is modified (phosphotyrosine). Lysine 112 is subject to N6-acetyllysine. Position 113 is a phosphotyrosine (tyrosine 113). 115-123 provides a ligand contact to ATP; it reads SHGATGKGN. L-aspartate-binding residues include threonine 119, asparagine 123, and aspartate 124. An L-citrulline-binding site is contributed by asparagine 123. Arginine 127 contacts L-citrulline. N6-acetyllysine; by CLOCK occurs at positions 165 and 176. L-citrulline is bound by residues serine 180 and serine 189. A Phosphoserine modification is found at serine 180. Serine 219 is modified (phosphoserine). 2 residues coordinate L-citrulline: glutamate 270 and tyrosine 282.

It belongs to the argininosuccinate synthase family. Type 1 subfamily. Homotetramer. Interacts with NMRAL1. Interacts with CLOCK; in a circadian manner. Forms tissue-specific complexes with ASL, SLC7A1, HSP90AA1 and nitric oxide synthase NOS1, NOS2 or NOS3; the complex regulates cell-autonomous L-arginine synthesis and citrulline recycling while channeling extracellular L-arginine to nitric oxide synthesis pathway. Acetylated by CLOCK in a circadian manner which negatively regulates its enzyme activity. Deacetylated by histone deacetylases.

It is found in the cytoplasm. Its subcellular location is the cytosol. It carries out the reaction L-citrulline + L-aspartate + ATP = 2-(N(omega)-L-arginino)succinate + AMP + diphosphate + H(+). The protein operates within amino-acid biosynthesis; L-arginine biosynthesis; L-arginine from L-ornithine and carbamoyl phosphate: step 2/3. Its pathway is nitrogen metabolism; urea cycle; (N(omega)-L-arginino)succinate from L-aspartate and L-citrulline: step 1/1. In terms of biological role, one of the enzymes of the urea cycle, the metabolic pathway transforming neurotoxic amonia produced by protein catabolism into inocuous urea in the liver of ureotelic animals. Catalyzes the formation of arginosuccinate from aspartate, citrulline and ATP and together with ASL it is responsible for the biosynthesis of arginine in most body tissues. The protein is Argininosuccinate synthase of Bos taurus (Bovine).